The chain runs to 460 residues: Argininosuccinate lyase (460 aa).

Belongs to the lyase 1 family. Argininosuccinate lyase subfamily.

It is found in the cytoplasm. It carries out the reaction 2-(N(omega)-L-arginino)succinate = fumarate + L-arginine. It participates in amino-acid biosynthesis; L-arginine biosynthesis; L-arginine from L-ornithine and carbamoyl phosphate: step 3/3. This chain is Argininosuccinate lyase, found in Solibacter usitatus (strain Ellin6076).